We begin with the raw amino-acid sequence, 536 residues long: Chaperonin GroEL 2 (536 aa).

ATP is bound by residues 29–32 (TLGP), lysine 50, glycine 416, and aspartate 497.

The protein belongs to the chaperonin (HSP60) family. In terms of assembly, forms a cylinder of 14 subunits composed of two heptameric rings stacked back-to-back. Interacts with the co-chaperonin GroES.

The protein localises to the cytoplasm. The catalysed reaction is ATP + H2O + a folded polypeptide = ADP + phosphate + an unfolded polypeptide.. Functionally, together with its co-chaperonin GroES, plays an essential role in assisting protein folding. The GroEL-GroES system forms a nano-cage that allows encapsulation of the non-native substrate proteins and provides a physical environment optimized to promote and accelerate protein folding. The polypeptide is Chaperonin GroEL 2 (Chlamydia caviae (strain ATCC VR-813 / DSM 19441 / 03DC25 / GPIC) (Chlamydophila caviae)).